The sequence spans 1200 residues: MNFEGLDPGLAEFSPAMHSTLDPVLDAHLNPSLLQNVELDPEGVALEALPVQESVHIMEGVYSELHSVVAEVGVPVSVSHFDLHEEMLWVGSHGGHATSFFGPALERYSSFQVNGGDDIRQIQSLENGILFLTKNNLKYMARGGLIIFDYLLDENEDMHSVLLTDNSTLLVGGLQNHVLEIDLNTVQETQKYAVETPGVTIMRQTNRFFFCGHTSGKVSLRDLRSFKVEHEFDAFSGSLSDFDVHGNLLAACGFSSRLTGLACDRFLKVYDLRMMRAITPLQVHVDPAFLRFIPTYTSRLAIISQSGQCQFCEPTGLANPADIFHVNPVGPLLMTFDVSASKQALAFGDSEGCVHLWTDSPEPSFNPYSRETEFALPCLVDSLPPLDWSQDLLPLSLIPVPLTTDALLSDWPAANSAPAPRRAPPVDAEILRTMKKVGFIGYAPNPRTRLRNQIPYRLKESDHEFDNFSQVTESPTGREEEPLHTVSKKYRKVTIKYSKLGLEDFDFKHYNKTLFAGLEPHIPNAYCNCMIQVLYFLEPVRCLIQNHLCQKEFCLACELGFLFHMLDLSRGDPCQGSNFLRAFRTIPEASALGLILADSDEASGKGSLARLIQRWNRFILTQLHQDMQELEVPQAYRGAGGSFCSSGDSIIGQLFSCEMENCSLCRCGSETVRASSTLLFTLSYPEDKTGKNYDFAQVLKRSICLEQNTQAWCDNCEKYQPTIQTRNIRHLPDILVINCEVNSSKEADFWRLQAEVAFKIAVKKYGGEMKSKEFALADRKELRSPEGFLCSSIEELKNVWLPFSIRMKMTKNKGLDVCNWADEHELSSLGAPSQWGPARAEEELGVYVYDLMATVVHILDSRTGGSLVAHIKVGETYHQRKEGVTHQQWYLFNDFLIEPIDKYEAVQFDMNWKVPAILYYVKRNLNSRYNLNIKNPIEASVLLAEASLARKQRKTHTTFIPLMLNEMPQVGDLVGLDAEFVTLNEEEAELRSDGTKSTIKPSQMSVARITCVRGQGPNEGIPFIDDYISTQEQVVDYLTQYSGIKPGDLDAKISSKHLTTLKSTYLKLRFLIDIGVKFVGHGLQKDFRVINLMVPKDQVLDTVYLFHMPRKRMISLRFLAWYFLDLKIQGETHDSIEDARTALQLYRKYLELSKNGTEPESFHKVLKGLYEKGRKMDWKVPEPESQTSPKNAAVFSVLAL.

WD repeat units follow at residues 153 to 193, 195 to 231, 244 to 280, and 328 to 367; these read DENE…QKYA, ETPG…VEHE, VHGN…AITP, and PVGP…SFNP. Residues 368-484 form a linker region; it reads YSRETEFALP…PTGREEEPLH (117 aa). A USP domain is found at 485 to 923; sequence TVSKKYRKVT…VPAILYYVKR (439 aa). The residue at position 784 (Ser-784) is a Phosphoserine. The Exonuclease domain maps to 974–1146; the sequence is VGLDAEFVTL…EDARTALQLY (173 aa). A divalent metal cation-binding residues include Asp-977, Glu-979, Asp-1086, and Asp-1138. A Phosphoserine modification is found at Ser-1188.

Belongs to the peptidase C19 family. PAN2 subfamily. In terms of assembly, forms a heterotrimer with an asymmetric homodimer of the regulatory subunit PAN3 to form the poly(A)-nuclease (PAN) deadenylation complex. Interacts with PAN3 isoform 1/Pan3L and isoform 3/Pan3S. Interacts with ZFP36. A divalent metal cation is required as a cofactor.

It is found in the cytoplasm. Its subcellular location is the P-body. The protein resides in the nucleus. The enzyme catalyses Exonucleolytic cleavage of poly(A) to 5'-AMP.. With respect to regulation, positively regulated by the regulatory subunit PAN3. Functionally, catalytic subunit of the poly(A)-nuclease (PAN) deadenylation complex, one of two cytoplasmic mRNA deadenylases involved in general and miRNA-mediated mRNA turnover. PAN specifically shortens poly(A) tails of RNA and the activity is stimulated by poly(A)-binding protein (PABP). PAN deadenylation is followed by rapid degradation of the shortened mRNA tails by the CCR4-NOT complex. Deadenylated mRNAs are then degraded by two alternative mechanisms, namely exosome-mediated 3'-5' exonucleolytic degradation, or deadenylation-dependent mRNA decaping and subsequent 5'-3' exonucleolytic degradation by XRN1. Also acts as an important regulator of the HIF1A-mediated hypoxic response. Required for HIF1A mRNA stability independent of poly(A) tail length regulation. This chain is PAN2-PAN3 deadenylation complex catalytic subunit Pan2, found in Mus musculus (Mouse).